The sequence spans 588 residues: Aspartate--tRNA ligase (588 aa).

Position 172 (Glu-172) interacts with L-aspartate. The interval 196-199 (QLFK) is aspartate. Arg-218 lines the L-aspartate pocket. Residues 218–220 (RDE) and Gln-227 each bind ATP. His-449 serves as a coordination point for L-aspartate. Residue Glu-483 coordinates ATP. Arg-490 serves as a coordination point for L-aspartate. 535 to 538 (GLDR) lines the ATP pocket.

This sequence belongs to the class-II aminoacyl-tRNA synthetase family. Type 1 subfamily. Homodimer.

The protein localises to the cytoplasm. It catalyses the reaction tRNA(Asp) + L-aspartate + ATP = L-aspartyl-tRNA(Asp) + AMP + diphosphate. Functionally, catalyzes the attachment of L-aspartate to tRNA(Asp) in a two-step reaction: L-aspartate is first activated by ATP to form Asp-AMP and then transferred to the acceptor end of tRNA(Asp). This chain is Aspartate--tRNA ligase, found in Haemophilus influenzae (strain PittGG).